The sequence spans 396 residues: Elongation factor Tu (396 aa).

One can recognise a tr-type G domain in the interval 10-206 (KPHVNVGTIG…ALDDYIPEPE (197 aa)). The interval 19-26 (GHVDHGKT) is G1. Position 19–26 (19–26 (GHVDHGKT)) interacts with GTP. Thr-26 is a Mg(2+) binding site. The interval 60-64 (GITIA) is G2. The segment at 81 to 84 (DCPG) is G3. Residues 81-85 (DCPGH) and 136-139 (NKAD) each bind GTP. Positions 136-139 (NKAD) are G4. The segment at 174 to 176 (SAL) is G5.

Belongs to the TRAFAC class translation factor GTPase superfamily. Classic translation factor GTPase family. EF-Tu/EF-1A subfamily. As to quaternary structure, monomer.

Its subcellular location is the cytoplasm. It carries out the reaction GTP + H2O = GDP + phosphate + H(+). GTP hydrolase that promotes the GTP-dependent binding of aminoacyl-tRNA to the A-site of ribosomes during protein biosynthesis. In Methylococcus capsulatus (strain ATCC 33009 / NCIMB 11132 / Bath), this protein is Elongation factor Tu.